A 91-amino-acid polypeptide reads, in one-letter code: MKVNLILFSLFLLVSIMACNVFAFSISGGGSERSYKETEKTSAMTTTHSTKLQPSQAILFKMREDAPPLNLTEEMPPPFPTKANYLIHPVR.

The signal sequence occupies residues 1–18; it reads MKVNLILFSLFLLVSIMA. A lipid anchor (N-palmitoyl cysteine) is attached at Cys-19. Cys-19 carries S-diacylglycerol cysteine lipidation.

Its subcellular location is the cell membrane. This is an uncharacterized protein from Escherichia coli (strain K12).